A 342-amino-acid chain; its full sequence is Probable endoglucanase (342 aa).

The N-terminal stretch at 1 to 20 (MSVMAAMGGAQVLSSTGAFA) is a signal peptide. The Proton donor role is filled by E57. D114 serves as the catalytic Nucleophile.

This sequence belongs to the glycosyl hydrolase 8 (cellulase D) family.

It is found in the secreted. It carries out the reaction Endohydrolysis of (1-&gt;4)-beta-D-glucosidic linkages in cellulose, lichenin and cereal beta-D-glucans.. Functionally, enzyme capable of hydrolyzing carboxy-methyl-cellulose (CMC). The sequence is that of Probable endoglucanase (cmcAX) from Novacetimonas hansenii (Komagataeibacter hansenii).